The primary structure comprises 103 residues: Large ribosomal subunit protein bL21 (103 aa).

It belongs to the bacterial ribosomal protein bL21 family. Part of the 50S ribosomal subunit. Contacts protein L20.

Its function is as follows. This protein binds to 23S rRNA in the presence of protein L20. This Bordetella avium (strain 197N) protein is Large ribosomal subunit protein bL21.